A 121-amino-acid polypeptide reads, in one-letter code: Small ribosomal subunit protein uS10 (121 aa).

At serine 2 the chain carries N-acetylserine. Glycyl lysine isopeptide (Lys-Gly) (interchain with G-Cter in ubiquitin) cross-links involve residues lysine 6, lysine 8, lysine 21, lysine 32, and lysine 101.

The protein belongs to the universal ribosomal protein uS10 family. Component of the small ribosomal subunit (SSU). Mature yeast ribosomes consist of a small (40S) and a large (60S) subunit. The 40S small subunit contains 1 molecule of ribosomal RNA (18S rRNA) and 33 different proteins (encoded by 57 genes). The large 60S subunit contains 3 rRNA molecules (25S, 5.8S and 5S rRNA) and 46 different proteins (encoded by 81 genes). Post-translationally, ubiquitinated at Lys-6 and Lys-8 by HEL2, to activate the ribosome quality control (RQC) pathway in response to stalled ribosomes. In terms of processing, N-terminally acetylated by acetyltransferase NatA. Also partially acetylated by NatC.

The protein resides in the cytoplasm. Its function is as follows. Component of the ribosome, a large ribonucleoprotein complex responsible for the synthesis of proteins in the cell. The small ribosomal subunit (SSU) binds messenger RNAs (mRNAs) and translates the encoded message by selecting cognate aminoacyl-transfer RNA (tRNA) molecules. The large subunit (LSU) contains the ribosomal catalytic site termed the peptidyl transferase center (PTC), which catalyzes the formation of peptide bonds, thereby polymerizing the amino acids delivered by tRNAs into a polypeptide chain. The nascent polypeptides leave the ribosome through a tunnel in the LSU and interact with protein factors that function in enzymatic processing, targeting, and the membrane insertion of nascent chains at the exit of the ribosomal tunnel. The sequence is that of Small ribosomal subunit protein uS10 from Saccharomyces cerevisiae (strain ATCC 204508 / S288c) (Baker's yeast).